A 324-amino-acid polypeptide reads, in one-letter code: Glutamyl-Q tRNA(Asp) synthetase (324 aa).

Residues 5 to 9 (RLAPS) and Glu41 each bind L-glutamate. The 'HIGH' region signature appears at 8 to 18 (PSPTGNIHLGN). Zn(2+) contacts are provided by Cys105, Cys107, Tyr128, and Cys132. The L-glutamate site is built by Tyr193 and Arg211. Residues 249 to 253 (RLAKR) carry the 'KMSKS' region motif. Lys252 lines the ATP pocket.

Belongs to the class-I aminoacyl-tRNA synthetase family. GluQ subfamily. Zn(2+) is required as a cofactor.

Functionally, catalyzes the tRNA-independent activation of glutamate in presence of ATP and the subsequent transfer of glutamate onto a tRNA(Asp). Glutamate is transferred on the 2-amino-5-(4,5-dihydroxy-2-cyclopenten-1-yl) moiety of the queuosine in the wobble position of the QUC anticodon. The polypeptide is Glutamyl-Q tRNA(Asp) synthetase (Nitratidesulfovibrio vulgaris (strain ATCC 29579 / DSM 644 / CCUG 34227 / NCIMB 8303 / VKM B-1760 / Hildenborough) (Desulfovibrio vulgaris)).